The following is a 475-amino-acid chain: Flotillin-like protein 4 (475 aa).

2 coiled-coil regions span residues 235–255 (ENQR…KKAA) and 305–325 (QYET…KEAE).

This sequence belongs to the band 7/mec-2 family. Flotillin subfamily. In terms of tissue distribution, expressed in roots and nodules. Primarily expressed in vascular tissues. Upon induction of nodulation, expansion of expression in the root cortex in the region of elongating root hairs, which will eventually become colonized by bacteria. Expressed in the infection zone in nodules.

It is found in the membrane. Its subcellular location is the caveola. It localises to the cell membrane. Its function is as follows. May act as a scaffolding protein within caveolar membranes, functionally participating in formation of caveolae or caveolae-like vesicles. Required for normal infection threads initiation and elongation and nodulation. Probably involved in polar growth of the infection thread. The protein is Flotillin-like protein 4 (FLOT4) of Medicago truncatula (Barrel medic).